Consider the following 490-residue polypeptide: Bifunctional protein HldE (490 aa).

The interval 1-330 is ribokinase; it reads MERKNVESLF…GSMGFQHSDS (330 aa). Residue 205–208 participates in ATP binding; that stretch reads NRKE. The active site involves Asp275. Residues 356–490 are cytidylyltransferase; that stretch reads FTNGCFDLLH…DKILRAYGEE (135 aa).

In the N-terminal section; belongs to the carbohydrate kinase PfkB family. The protein in the C-terminal section; belongs to the cytidylyltransferase family. As to quaternary structure, homodimer.

The enzyme catalyses D-glycero-beta-D-manno-heptose 7-phosphate + ATP = D-glycero-beta-D-manno-heptose 1,7-bisphosphate + ADP + H(+). It carries out the reaction D-glycero-beta-D-manno-heptose 1-phosphate + ATP + H(+) = ADP-D-glycero-beta-D-manno-heptose + diphosphate. It participates in nucleotide-sugar biosynthesis; ADP-L-glycero-beta-D-manno-heptose biosynthesis; ADP-L-glycero-beta-D-manno-heptose from D-glycero-beta-D-manno-heptose 7-phosphate: step 1/4. It functions in the pathway nucleotide-sugar biosynthesis; ADP-L-glycero-beta-D-manno-heptose biosynthesis; ADP-L-glycero-beta-D-manno-heptose from D-glycero-beta-D-manno-heptose 7-phosphate: step 3/4. Functionally, catalyzes the phosphorylation of D-glycero-D-manno-heptose 7-phosphate at the C-1 position to selectively form D-glycero-beta-D-manno-heptose-1,7-bisphosphate. In terms of biological role, catalyzes the ADP transfer from ATP to D-glycero-beta-D-manno-heptose 1-phosphate, yielding ADP-D-glycero-beta-D-manno-heptose. The protein is Bifunctional protein HldE of Geobacter metallireducens (strain ATCC 53774 / DSM 7210 / GS-15).